Consider the following 145-residue polypeptide: D-aminoacyl-tRNA deacylase (145 aa).

A Gly-cisPro motif, important for rejection of L-amino acids motif is present at residues 137-138 (GP).

This sequence belongs to the DTD family. As to quaternary structure, homodimer.

The protein localises to the cytoplasm. The enzyme catalyses glycyl-tRNA(Ala) + H2O = tRNA(Ala) + glycine + H(+). The catalysed reaction is a D-aminoacyl-tRNA + H2O = a tRNA + a D-alpha-amino acid + H(+). An aminoacyl-tRNA editing enzyme that deacylates mischarged D-aminoacyl-tRNAs. Also deacylates mischarged glycyl-tRNA(Ala), protecting cells against glycine mischarging by AlaRS. Acts via tRNA-based rather than protein-based catalysis; rejects L-amino acids rather than detecting D-amino acids in the active site. By recycling D-aminoacyl-tRNA to D-amino acids and free tRNA molecules, this enzyme counteracts the toxicity associated with the formation of D-aminoacyl-tRNA entities in vivo and helps enforce protein L-homochirality. This chain is D-aminoacyl-tRNA deacylase, found in Dinoroseobacter shibae (strain DSM 16493 / NCIMB 14021 / DFL 12).